Reading from the N-terminus, the 956-residue chain is Angiomotin-like protein 1 (956 aa).

The interval 197 to 246 (QSQFFRGQQQQQQQQGAVGHGYYMAGGTSQKSRTEGRPTVNRANSGQAHK) is disordered. A phosphoserine mark is found at S241 and S269. Residues 259–279 (RSLSERIMQLSLERNGAKQHL) are a coiled coil. Disordered regions lie at residues 274-322 (GAKQ…QMMS), 382-405 (PSTM…LHSV), and 411-430 (LPMA…SQQL). Positions 282 to 294 (SGNGKGFKVGGGP) are enriched in gly residues. At S295 the chain carries Phosphoserine. Positions 382–398 (PSTMQQHSPMSSQTSSA) are enriched in polar residues. Coiled coils occupy residues 438-639 (VERA…WLER) and 665-694 (ALLE…YLEE). The residue at position 720 (S720) is a Phosphoserine. A coiled-coil region spans residues 729-762 (SLEAHIWQEEEEVVQANRRCQDMEYTIKNLHAKI). The segment at 773–823 (QQRSRKDAGKTDSSSLRPARSVPSIAAATGTHSRQTSLTSSQLAEEKKEEK) is disordered. S793, S805, and S828 each carry phosphoserine. Residues 802 to 815 (GTHSRQTSLTSSQL) are compositionally biased toward polar residues. Disordered regions lie at residues 841 to 880 (ASAP…TQTD) and 894 to 944 (PSRG…LHKP). A compositionally biased stretch (low complexity) spans 852-866 (SALSSIASTTAASSA). A Phosphoserine modification is found at S900. T902 is modified (phosphothreonine). The residue at position 906 (S906) is a Phosphoserine. The short motif at 953–956 (EVLI) is the PDZ-binding element.

It belongs to the angiomotin family. In terms of processing, polyubiquitinated by NEDD4, leading to proteasomal degradation.

The protein localises to the cell junction. It is found in the tight junction. Inhibits the Wnt/beta-catenin signaling pathway, probably by recruiting CTNNB1 to recycling endosomes and hence preventing its translocation to the nucleus. The sequence is that of Angiomotin-like protein 1 (AMOTL1) from Homo sapiens (Human).